A 1161-amino-acid chain; its full sequence is MEPEEERIRYSQRLRGTMRRRYEDDGISDDEIEGKRTFDLEEKLQTNKYNANFVTFMEGKDFNVEYIQRGGLRDPLIFKNSDGLGIKMPDPDFTVNDVKMCVGSRRMVDVMDVNTQKGIEMTMAQWTRYYETPEEEREKLYNVISLEFSHTRLENMVQWPSTVDFIDWVDNMWPRHLKESQTESTNAILEMQYPKVQKYCLISVRGCYTDFHVDFGGTSVWYHIHQGGKVFWLIPPTAHNLELYENWLLSGKQGDIFLGDRVSDCQRIELKQGYTFVIPSGWIHAVYTPTDTLVFGGNFLHSFNIPMQLKIYSIEDRTRVPNKFRYPFYYEMCWYVLERYVYCITNRSHLTKDFQKESLSMDMELNELESGNGDEEGVDREARRMNNKRSVLTSPVANGVNLDYDGLGKACRSLPSLKKTLSGDSSSDSTRGSHNGQVWDPQCSPKKDRQVHLTHFELEGLRCLVDKLESLPLHKKCVPTGIEDEDALIADVKILLEELASSDPKLALTGVPIVQWPKRDKLKFPTRPKVRVPTIPITKPHTMKPAPRLTPVRPAAASPIVSGARRRRVRCRKCKACVQGECGVCHYCRDMKKFGGPGRMKQSCVLRQCLAPRLPHSVTCSLCGEVDQNEETQDFEKKLMECCICNEIVHPGCLQMDGEGLLNEELPNCWECPKCYQEDSSDKAQKRKIEESDEEAVQAKVLRPLRSCEEPLTPPPHSPTSMLQLIHDPVSPRGMVTRSSPGAGPSDHHSASRDERFKRRQLLRLQATERTMVREKENNPSGKKELSEVEKAKIRGSYLTVTLQRPTKELHGTSIVPKLQAITASSANLRPNPRVLMQHCPARNPQHGDEEGLGGEEEEEEEEEEDDSAEEGGAARLNGRGSWAQDGDESWMQREVWMSVFRYLSRKELCECMRVCKTWYKWCCDKRLWTKIDLSRCKAIVPQALSGIIKRQPVSLDLSWTNISKKQLTWLVNRLPGLKDLLLAGCSWSAVSALSTSSCPLLRTLDLRWAVGIKDPQIRDLLTPPTDKPGQDNRSKLRNMTDFRLAGLDITDATLRLIIRHMPLLSRLDLSHCSHLTDQSSNLLTAVGSSTRYSLTELNMAGCNKLTDQTLFFLRRIANVTLIDLRGCKQITRKACEHFISDLSINSLYCLSDEKLIQKIS.

A Phosphoserine modification is found at Ser28. The region spanning 148–316 (FSHTRLENMV…MQLKIYSIED (169 aa)) is the JmjC domain. Thr209 lines the substrate pocket. Residues His212 and Asp214 each contribute to the Fe cation site. Lys229 lines the substrate pocket. His284 contributes to the Fe cation binding site. A phosphoserine mark is found at Ser390 and Ser394. A compositionally biased stretch (low complexity) spans 419–433 (KTLSGDSSSDSTRGS). The disordered stretch occupies residues 419–445 (KTLSGDSSSDSTRGSHNGQVWDPQCSP). Ser444 is modified (phosphoserine). A Glycyl lysine isopeptide (Lys-Gly) (interchain with G-Cter in SUMO2) cross-link involves residue Lys505. The segment at 532–557 (VPTIPITKPHTMKPAPRLTPVRPAAA) is disordered. Thr550 bears the Phosphothreonine mark. At Ser558 the chain carries Phosphoserine. Residues 564 to 610 (ARRRRVRCRKCKACVQGECGVCHYCRDMKKFGGPGRMKQSCVLRQCL) form a CXXC-type zinc finger. The Zn(2+) site is built by Cys571, Cys574, Cys577, Cys582, Cys585, Cys588, Cys604, Cys609, Cys620, and Cys623. The PHD-type zinc finger occupies 617–678 (SVTCSLCGEV…CWECPKCYQE (62 aa)). Thr632 is modified (phosphothreonine). Zn(2+)-binding residues include Cys642, Cys645, His650, Cys653, Cys672, and Cys675. The residue at position 692 (Ser692) is a Phosphoserine. The segment at 705-789 (LRSCEEPLTP…PSGKKELSEV (85 aa)) is disordered. Thr713 bears the Phosphothreonine mark. Phosphoserine occurs at positions 718 and 731. Basic and acidic residues-rich tracts occupy residues 746–757 (SDHHSASRDERF) and 771–789 (TMVR…LSEV). 3 positions are modified to phosphoserine: Ser825, Ser868, and Ser882. The tract at residues 840–886 (CPARNPQHGDEEGLGGEEEEEEEEEEDDSAEEGGAARLNGRGSWAQD) is disordered. Acidic residues predominate over residues 851–870 (EGLGGEEEEEEEEEEDDSAE). The F-box domain occupies 888-935 (DESWMQREVWMSVFRYLSRKELCECMRVCKTWYKWCCDKRLWTKIDLS). LRR repeat units follow at residues 960-981 (WTNI…LKDL) and 983-1009 (LAGC…DLRW). An ADP-ribosylarginine modification is found at Arg1019. LRR repeat units lie at residues 1047–1072 (GLDI…DLSH), 1073–1102 (CSHL…NMAG), 1103–1127 (CNKL…DLRG), and 1128–1155 (CKQI…SDEK).

The protein belongs to the JHDM1 histone demethylase family. Part of a SCF (SKP1-cullin-F-box) protein ligase complex. Interacts with CBX5/HP1A; the interaction promotes CBX5 localization to chromatin. The SKP1-KDM2A complex interacts with UBB. The cofactor is Fe(2+). In terms of processing, mono-ADP-ribosylated at Arg-1019 in response to DNA damage, leading to displacement from chromatin, resulting in increased dimethylation of histone H3 at 'Lys-36'.

It localises to the nucleus. It is found in the nucleoplasm. The protein resides in the chromosome. It carries out the reaction N(6),N(6)-dimethyl-L-lysyl(36)-[histone H3] + 2 2-oxoglutarate + 2 O2 = L-lysyl(36)-[histone H3] + 2 formaldehyde + 2 succinate + 2 CO2. In terms of biological role, histone demethylase that specifically demethylates 'Lys-36' of histone H3, thereby playing a central role in histone code. Preferentially demethylates dimethylated H3 'Lys-36' residue while it has weak or no activity for mono- and tri-methylated H3 'Lys-36'. May also recognize and bind to some phosphorylated proteins and promote their ubiquitination and degradation. Required to maintain the heterochromatic state. Associates with centromeres and represses transcription of small non-coding RNAs that are encoded by the clusters of satellite repeats at the centromere. Required to sustain centromeric integrity and genomic stability, particularly during mitosis. Regulates circadian gene expression by repressing the transcriptional activator activity of CLOCK-BMAL1 heterodimer and RORA in a catalytically-independent manner. The protein is Lysine-specific demethylase 2A (Kdm2a) of Mus musculus (Mouse).